Here is a 210-residue protein sequence, read N- to C-terminus: 7-methyl-GTP pyrophosphatase (210 aa).

The active-site Proton acceptor is aspartate 79.

This sequence belongs to the Maf family. YceF subfamily. The cofactor is a divalent metal cation.

The protein resides in the cytoplasm. It carries out the reaction N(7)-methyl-GTP + H2O = N(7)-methyl-GMP + diphosphate + H(+). Its function is as follows. Nucleoside triphosphate pyrophosphatase that hydrolyzes 7-methyl-GTP (m(7)GTP). May have a dual role in cell division arrest and in preventing the incorporation of modified nucleotides into cellular nucleic acids. This chain is 7-methyl-GTP pyrophosphatase, found in Burkholderia lata (strain ATCC 17760 / DSM 23089 / LMG 22485 / NCIMB 9086 / R18194 / 383).